A 417-amino-acid chain; its full sequence is MAEIKNYTLNFGPQHPAAHGVLRLVLELDGEVIQRADPHIGLLHRATEKLAESKTYIQSLPYMDRLDYVSMMSNEHAYCLAIEKLLGVDVPIRAQYIRVMFSEITRLLNHLMWLGAHGLDCGAMNMLIYCFREREVLFDMYEAVSGARMHAAYFRPGGVYRDLPESMSQYKVNKIRNAKAIDALNENRQGSLLDFIDDFVTKFPKLVDEYETLLTDNRIWKQRTVGVGVVSPERALNLGFTGPMLRGSGFAWDLRKQQPYEVYAQMDFDIPVGKTGDCYDRYLVRVAEMRQSNRIIKQCVDWLRVNSGPVITSNHKVAPPNRESMKSNMEELIHHFKLFTEGFHVPEGEAYAAVEHPKGEFGIYIVSDGANKPYRLKIRPPGFSHLAAMDEMSRGHMIADAVAVIGTMDIVFGEIDR.

The protein belongs to the complex I 49 kDa subunit family. NDH-1 is composed of 14 different subunits. Subunits NuoB, C, D, E, F, and G constitute the peripheral sector of the complex.

The protein localises to the cell inner membrane. It catalyses the reaction a quinone + NADH + 5 H(+)(in) = a quinol + NAD(+) + 4 H(+)(out). Its function is as follows. NDH-1 shuttles electrons from NADH, via FMN and iron-sulfur (Fe-S) centers, to quinones in the respiratory chain. The immediate electron acceptor for the enzyme in this species is believed to be ubiquinone. Couples the redox reaction to proton translocation (for every two electrons transferred, four hydrogen ions are translocated across the cytoplasmic membrane), and thus conserves the redox energy in a proton gradient. The chain is NADH-quinone oxidoreductase subunit D from Polaromonas naphthalenivorans (strain CJ2).